Consider the following 770-residue polypeptide: Protein argonaute (770 aa).

Residues 1-151 (MKAKVVINLV…VIHIIHQIQS (151 aa)) form an N-terminal domain region. Residues 154–272 (TLWELVNKDP…LLPQLVVPTY (119 aa)) form the PAZ domain. An interdomain connector region spans residues 276 to 361 (QLESDVAKEI…SQLLLWTNYS (86 aa)). Residues 362 to 544 (RKYPVILPYE…LSKLGVKYYV (183 aa)) are mid domain. The 284-residue stretch at 473–756 (GLAFIAARNK…FANAIRNEWK (284 aa)) folds into the Piwi domain. Catalysis depends on residues D558, E596, D628, and H745. D558 lines the Mn(2+) pocket. The Mn(2+) site is built by D628, H745, and V770.

It belongs to the argonaute family. Long pAgo subfamily. As to quaternary structure, monomer. Requires Mn(2+) as cofactor.

With respect to regulation, inhibited at greater than 500 mM NaCl. Its function is as follows. A DNA-guided ssDNA endonuclease that may play a role in defense against invading mobile genetic elements. Uses short 5'-phospho-ssDNA sequences as guides (gDNA) to bind complementary target strands, resulting in cleavage of the target DNA (tDNA). Endonucleolytically cleaves DNA in short dsDNA (the gDNA indicates where to cleave on the tDNA). Efficient guide-dependent target DNA cleavage requires a minimal gDNA length of 15 nucleotides (nt) and works up to at least 31 nt. Overexpression decreases plasmid transformation efficiency. Has no appreciable activity with gRNA or on target RNA. Also has guide-independent activity on plasmid DNA called 'chopping'. The cleavage site is 10 nucleotides (nt) downstream of the target residue base-paired with the 5'-end of the gDNA, cleavage is insensitive to adenine methylation. DNA cleavage produces 5'-phosphomonoesters (as it can be ligated by T4 DNA ligase). In Pyrococcus furiosus (strain ATCC 43587 / DSM 3638 / JCM 8422 / Vc1), this protein is Protein argonaute.